The chain runs to 1009 residues: Anillin-like protein 2 (1009 aa).

3 disordered regions span residues 1–29 (MYRRENINFSHPPQLKSPPPMSSPLDSNR), 272–295 (FGQEESVRASPMSRRNRRGTQTIV), and 539–558 (GTGYSASSSGPQFTRSPTLV). Over residues 542–557 (YSASSSGPQFTRSPTL) the composition is skewed to polar residues. Residues 626 to 657 (SAADKINDSKRQISKLIETIEKTRKHIQLAEI) are a coiled coil. The PH domain maps to 892-1005 (DVEYRGFLYL…WLNAINDTLF (114 aa)).

In terms of tissue distribution, localizes to the surface of the rachis.

Required to maintain the structure of the rachis, the central cytoplasmic core of the syncytial adult gonad. Failure to maintain the rachis leads to premature dissociation of oocytes and thereby impedes oogenesis. The chain is Anillin-like protein 2 (ani-2) from Caenorhabditis elegans.